The sequence spans 120 residues: uncharacterized protein (120 aa).

The signal sequence occupies residues 1–19 (MTSFAVVARLITRAPRVRA). 2 disordered regions span residues 48–71 (VAKKADEGAQTISDAAGNLKDKAK) and 90–120 (DTVTGKTEETKESIKATAKTVERSMNTKNLK). A compositionally biased stretch (basic and acidic residues) spans 90 to 103 (DTVTGKTEETKESI).

This is an uncharacterized protein from Arabidopsis thaliana (Mouse-ear cress).